Consider the following 130-residue polypeptide: Small ribosomal subunit protein uS8 (130 aa).

It belongs to the universal ribosomal protein uS8 family. Part of the 30S ribosomal subunit.

Functionally, one of the primary rRNA binding proteins, it binds directly to 16S rRNA central domain where it helps coordinate assembly of the platform of the 30S subunit. This Pyrobaculum neutrophilum (strain DSM 2338 / JCM 9278 / NBRC 100436 / V24Sta) (Thermoproteus neutrophilus) protein is Small ribosomal subunit protein uS8.